An 803-amino-acid chain; its full sequence is Phenylalanine--tRNA ligase beta subunit (803 aa).

One can recognise a tRNA-binding domain in the interval 40 to 150; it reads SNKFYGIVIA…IDAPIGCNFY (111 aa). Residues 405–480 enclose the B5 domain; the sequence is PKIKIIKLHR…RIYGYNHIPK (76 aa). Mg(2+) is bound by residues Asp458 and Glu468. One can recognise an FDX-ACB domain in the interval 710 to 803; that stretch reads SKFPKNYRDI…LKKHFNAIFR (94 aa).

Belongs to the phenylalanyl-tRNA synthetase beta subunit family. Type 1 subfamily. Tetramer of two alpha and two beta subunits. Requires Mg(2+) as cofactor.

Its subcellular location is the cytoplasm. It carries out the reaction tRNA(Phe) + L-phenylalanine + ATP = L-phenylalanyl-tRNA(Phe) + AMP + diphosphate + H(+). This is Phenylalanine--tRNA ligase beta subunit from Blochmanniella floridana.